A 273-amino-acid chain; its full sequence is Cysteine protease S273R (273 aa).

Residues H168 and N187 contribute to the active site. Substrate is bound at residue Q226. The active-site Nucleophile is the C232.

This sequence belongs to the peptidase C63 family.

Its subcellular location is the host cytoplasm. It localises to the virion. Its function is as follows. Cysteine protease that plays several role during infection including processing of the structural polyprotein or inhibition of the host immune response. Catalyzes the maturation of the pp220 and pp62 polyprotein precursors into core-shell proteins. Plays a role in the disruption of host pyroptosis via specific cleavage of gasdermin D/GSDMD. In addition, strongly decreases the host cGAS-STING signaling by targeting IKBKE via its enzymatic activity. Also impairs host FOXJ1-mediated antiviral effect via degradation of FOXJ1. Cleaves host G3BP1 inducing loss of stress granules formation. Interacts with and induces the degradation of host STAT2 via polyubiquitination of the latter. The chain is Cysteine protease S273R from Ornithodoros (relapsing fever ticks).